A 931-amino-acid chain; its full sequence is Dual O-methyltransferase/FAD-dependent monooxygenase elcB (931 aa).

The O-methyltransferase stretch occupies residues 1-463 (MAASTGLSTV…TTDKARPNGD (463 aa)). Asp-254 is a binding site for S-adenosyl-L-methionine. Catalysis depends on His-304, which acts as the Proton acceptor. The disordered stretch occupies residues 455-474 (TDKARPNGDTTHSGQASIPN). Polar residues predominate over residues 462-474 (GDTTHSGQASIPN). Positions 464–931 (TTHSGQASIP…TFEELDVAEL (468 aa)) are FAD-dependent monooxygenase. Glu-520, Arg-604, Asp-836, and Ala-849 together coordinate FAD.

The protein in the C-terminal section; belongs to the paxM FAD-dependent monooxygenase family. This sequence in the N-terminal section; belongs to the class I-like SAM-binding methyltransferase superfamily. Cation-independent O-methyltransferase family. COMT subfamily.

It catalyses the reaction nor-toralactone + S-adenosyl-L-methionine = toralactone + S-adenosyl-L-homocysteine + H(+). The enzyme catalyses toralactone + NADH + O2 + H(+) = 1-(3,4,5-trihydroxy-7-methoxynaphthalen-2-yl)propan-2-one + CO2 + NAD(+). Its pathway is secondary metabolite biosynthesis. Dual O-methyltransferase/FAD-dependent monooxygenase; part of the gene cluster that mediates the biosynthesis of elsinochrome C, a perelyenequinone phytotoxin structurally similar to cercosporin. The first step of elsinochrome C biosynthesis is performed by the polyketide synthase elcA which catalyzes the formation of nor-toralactone. The starter unit acyltransferase (SAT) domain of elcA initiates polyketide extension by the selective utilization of acetyl-CoA, which is elongated to the heptaketide in the beta-ketoacyl synthase (KS) domain by successive condensations with six malonyl units introduced by the malonyl acyltransferase (MAT) domain. The product template (PT) domain catalyzes C4-C9 and C2-C11 aldol cyclizations and dehydrations to a trihydroxynaphthalene, which is thought to be delivered to the thioesterase (TE) domain for product release. The bifunctional enzyme elcB then methylates nor-toralactone to toralactone before conducting an unusual oxidative aromatic ring opening. The next step in perylenequinone biosynthesis is an O-methylation at the nascent OH-6 of the elcB product performed by the O-methyltransferase elcD. The oxidative coupling of the two monomeric naphthol units in perylenequinone biosynthesis is catalyzed by the FAD-dependent monooxygenase elcE and the multicopper oxidase elcG. ElcG might catalyze the first intermolecular coupling in a regio- and stereo-selective manner via a phenol radical coupling mechanism and the elcE could forge the second C-C bond intramolecularly via a hydride transfer mechanism. The fasciclin domain-containing protein elcF might also play a role duting this step. The last piece of the puzzle in the biosynthesis of elsinochrome C is the additional annulation by enolate coupling to afford the dihydrobenzo(ghi)perylenequinone system, catalyzed by the FAD-dependent monooxygenase elcH. The chain is Dual O-methyltransferase/FAD-dependent monooxygenase elcB from Phaeosphaeria nodorum (strain SN15 / ATCC MYA-4574 / FGSC 10173) (Glume blotch fungus).